A 600-amino-acid polypeptide reads, in one-letter code: MSMRTEYCGLVTEHLLGQTVSLCGWVQRRRDHGGVIFIDLRDREGLVQVVCDPDRAEMFATAEGVRNEFCVQIKGLVRNRPDGTVNAGLKSGRIEVLCHELNVLNASVTPPFQLDDDNLSETTRLTHRVLDLRRPQMQHNLRLRYRVAIEARKYLDEQGFIDIETPMLTKSTPEGARDYLVPSRVNAGQFFALPQSPQLFKQLLMVANFDRYYQITKCFRDEDLRADRQPEFTQIDCETSFLGEQEIRDLFEDMIRHIFKTTIDVELDAKFPVMPYSEAMARFGSDKPDLRVQLEFTELTDAMKDVDFKVFSTPANAKDGRVAALRVPKGGELSRGDIDGYTEFVRIYGAKGLAWIKVNEKAKGRDGLQSPIVKNLHDASIAAILERTGAEDGDIIFFAADRAKVVNDSLGALRLKIGHSEFGKANGLVQAGWKPLWVVDFPMFEYDDEDARYVAAHHPFTSPKDEHLEYLETDPGRCLAKAYDMVLNGWEIGGGSVRIHREEVQSKVFRALKIGAEEAQLKFGFLLDALQYGAPPHGGIAFGLDRIVTMMAGADSIRDVIAFPKTQRAQDLLTQAPSPVDERQLRELHIRLRQPEQPKA.

Glutamate 174 serves as a coordination point for L-aspartate. Residues 198–201 (QLFK) are aspartate. Arginine 220 provides a ligand contact to L-aspartate. ATP-binding positions include 220 to 222 (RDE) and glutamine 229. Histidine 457 is an L-aspartate binding site. Position 491 (glutamate 491) interacts with ATP. Arginine 498 lines the L-aspartate pocket. Position 543–546 (543–546 (GLDR)) interacts with ATP.

The protein belongs to the class-II aminoacyl-tRNA synthetase family. Type 1 subfamily. Homodimer.

It is found in the cytoplasm. It carries out the reaction tRNA(Asx) + L-aspartate + ATP = L-aspartyl-tRNA(Asx) + AMP + diphosphate. Aspartyl-tRNA synthetase with relaxed tRNA specificity since it is able to aspartylate not only its cognate tRNA(Asp) but also tRNA(Asn). Reaction proceeds in two steps: L-aspartate is first activated by ATP to form Asp-AMP and then transferred to the acceptor end of tRNA(Asp/Asn). The sequence is that of Aspartate--tRNA(Asp/Asn) ligase from Burkholderia orbicola (strain AU 1054).